We begin with the raw amino-acid sequence, 386 residues long: uncharacterized protein (386 aa).

The next 2 helical transmembrane spans lie at 54-74 (AVLQMIDPPALVGCIAQAIVA) and 347-367 (LLGGIPLAGFFAAGEIGPIAG).

It to M.tuberculosis Rv0628c.

Its subcellular location is the cell membrane. This is an uncharacterized protein from Mycobacterium tuberculosis (strain CDC 1551 / Oshkosh).